A 168-amino-acid chain; its full sequence is Transcription antitermination protein NusB (168 aa).

Belongs to the NusB family.

In terms of biological role, involved in transcription antitermination. Required for transcription of ribosomal RNA (rRNA) genes. Binds specifically to the boxA antiterminator sequence of the ribosomal RNA (rrn) operons. The chain is Transcription antitermination protein NusB from Bradyrhizobium sp. (strain ORS 278).